We begin with the raw amino-acid sequence, 360 residues long: Homeobox-leucine zipper protein HOX21 (360 aa).

Disordered stretches follow at residues 25–75 (QQAA…SSAQ) and 88–126 (MLGK…EKKR). Residues 36–55 (HHHHHHHGHHHEQQQHHHHL) are compositionally biased toward basic residues. A compositionally biased stretch (pro residues) spans 56–68 (GPPPPPPPHPHNP). Gly residues predominate over residues 97–109 (GDGGGGGDEVNGG). Residues 121 to 180 (AGEKKRRLNVEQVRTLEKNFELGNKLEPERKMQLARALGLQPRQVAIWFQNRRARWKTKQ) constitute a DNA-binding region (homeobox). A leucine-zipper region spans residues 179–223 (KQLEKDYDALKRQLDAVKAENDALLNHNKKLQAEIVALKGREAAS). Disordered regions lie at residues 233-278 (EASC…GGGG) and 299-328 (GVDI…GNVQ). The segment covering 234–246 (ASCSNRSENSSEI) has biased composition (polar residues).

It belongs to the HD-ZIP homeobox family. Class I subfamily. In terms of tissue distribution, expressed in seedlings, roots, stems, leaf blades and panicles.

It is found in the nucleus. In terms of biological role, probable transcription factor. This is Homeobox-leucine zipper protein HOX21 (HOX21) from Oryza sativa subsp. indica (Rice).